The primary structure comprises 211 residues: Large ribosomal subunit protein uL4 (211 aa).

The segment covering 41 to 53 (QAHSRQGTASTLT) has biased composition (polar residues). Positions 41–78 (QAHSRQGTASTLTRAEVRGGGRKPYKQKGTGRARQGTI) are disordered. Residues 60–71 (GGRKPYKQKGTG) are compositionally biased toward basic residues.

The protein belongs to the universal ribosomal protein uL4 family. Part of the 50S ribosomal subunit.

One of the primary rRNA binding proteins, this protein initially binds near the 5'-end of the 23S rRNA. It is important during the early stages of 50S assembly. It makes multiple contacts with different domains of the 23S rRNA in the assembled 50S subunit and ribosome. Its function is as follows. Forms part of the polypeptide exit tunnel. The chain is Large ribosomal subunit protein uL4 from Prochlorococcus marinus (strain MIT 9313).